We begin with the raw amino-acid sequence, 423 residues long: Protein CLP1 homolog (423 aa).

ATP is bound by residues Glu16, Lys57, and 119 to 124; that span reads DVGKST.

This sequence belongs to the Clp1 family. Clp1 subfamily.

It localises to the nucleus. Its function is as follows. Required for endonucleolytic cleavage during polyadenylation-dependent pre-mRNA 3'-end formation. The polypeptide is Protein CLP1 homolog (cbc) (Drosophila yakuba (Fruit fly)).